The sequence spans 133 residues: Salivary cystatin-L (133 aa).

The first 19 residues, 1–19 (MTASFALVLLLGGVAVCIA), serve as a signal peptide directing secretion. The Cystatin domain occupies 29–115 (KANHQANPEY…VAQRTCTTVV (87 aa)).

It belongs to the cystatin family. In terms of tissue distribution, salivary gland.

The protein resides in the secreted. In terms of biological role, inhibitor of cysteine proteinases. Inhibits host cathepsin L (CTSL) and S (CTSS). Modulates production of various cytokines and chemokines in lipopolysaccharide (LPS)-stimulated mouse dendritic cell. Suppresses maturation of mouse bone-marrow-derived dendritic cells (BMDCs). The polypeptide is Salivary cystatin-L (Ixodes persulcatus (Taiga tick)).